The primary structure comprises 554 residues: MSELTIRPEEIRAALEEFVSSYTPDVASREEVGRVTEAGDGIARIEGLPSTMANELLRFEDGTLGLALNLDVREIGAVILGPFEGIEEGQTVKRTGEVLSVPVGDGFLGRVVDPLGRPLDGKGEIVAEGRRALEIQAPSVVQRQPVKEPLQTGIKAIDAMTAIGRGQRELIIGDRQTGKTAVAIDTIINQRANWESGDPKLQVKCIYVAIGQKGSTIAAVRSALEAAGAMEYTTIVAAPASDPAGFKYLAPYTGSAIGQHWMYKGQHALIVFDDLSKQAEAYRAISLLLRRPPGREAYPGDVFYLHSRLLERCAKLSDAMGGGSLTGLPIIETKGNDVSAYIPTNVISITDGQIFLETDLFNSGVRPAINVGISVSRVGGNAQLKAMKQVAGRLRLDLAQYRELEAFAAFGSDLDAASRAQLERGARLVELLKQPQYSPYPVEEQVVSLWAGTTGQLDDVPVTDIRRFERDFLEYVRLRHHGIFDEILKTGELTDNVVESLKLAIAEFKQTFETHDGKILGHEEAPQLDESHLAAEKVRKHVPPSKPTTQRTAG.

173–180 contacts ATP; that stretch reads GDRQTGKT. Positions 531-554 are disordered; that stretch reads SHLAAEKVRKHVPPSKPTTQRTAG.

This sequence belongs to the ATPase alpha/beta chains family. As to quaternary structure, F-type ATPases have 2 components, CF(1) - the catalytic core - and CF(0) - the membrane proton channel. CF(1) has five subunits: alpha(3), beta(3), gamma(1), delta(1), epsilon(1). CF(0) has three main subunits: a(1), b(2) and c(9-12). The alpha and beta chains form an alternating ring which encloses part of the gamma chain. CF(1) is attached to CF(0) by a central stalk formed by the gamma and epsilon chains, while a peripheral stalk is formed by the delta and b chains.

The protein localises to the cell membrane. The enzyme catalyses ATP + H2O + 4 H(+)(in) = ADP + phosphate + 5 H(+)(out). Functionally, produces ATP from ADP in the presence of a proton gradient across the membrane. The alpha chain is a regulatory subunit. This Acidothermus cellulolyticus (strain ATCC 43068 / DSM 8971 / 11B) protein is ATP synthase subunit alpha.